The chain runs to 245 residues: 3-deoxy-manno-octulosonate cytidylyltransferase (245 aa).

It belongs to the KdsB family.

Its subcellular location is the cytoplasm. It carries out the reaction 3-deoxy-alpha-D-manno-oct-2-ulosonate + CTP = CMP-3-deoxy-beta-D-manno-octulosonate + diphosphate. The protein operates within nucleotide-sugar biosynthesis; CMP-3-deoxy-D-manno-octulosonate biosynthesis; CMP-3-deoxy-D-manno-octulosonate from 3-deoxy-D-manno-octulosonate and CTP: step 1/1. It functions in the pathway bacterial outer membrane biogenesis; lipopolysaccharide biosynthesis. Activates KDO (a required 8-carbon sugar) for incorporation into bacterial lipopolysaccharide in Gram-negative bacteria. In Fusobacterium nucleatum subsp. nucleatum (strain ATCC 25586 / DSM 15643 / BCRC 10681 / CIP 101130 / JCM 8532 / KCTC 2640 / LMG 13131 / VPI 4355), this protein is 3-deoxy-manno-octulosonate cytidylyltransferase.